The following is a 563-amino-acid chain: Adenine deaminase (563 aa).

The protein belongs to the metallo-dependent hydrolases superfamily. Adenine deaminase family. Mn(2+) serves as cofactor.

The catalysed reaction is adenine + H2O + H(+) = hypoxanthine + NH4(+). The protein is Adenine deaminase of Brucella anthropi (strain ATCC 49188 / DSM 6882 / CCUG 24695 / JCM 21032 / LMG 3331 / NBRC 15819 / NCTC 12168 / Alc 37) (Ochrobactrum anthropi).